A 127-amino-acid chain; its full sequence is Glycine cleavage system H protein (127 aa).

The 83-residue stretch at 27–109 (TVRVGITHIA…YGEGWLYEVK (83 aa)) folds into the Lipoyl-binding domain. Lysine 68 bears the N6-lipoyllysine mark.

It belongs to the GcvH family. As to quaternary structure, the glycine cleavage system is composed of four proteins: P, T, L and H. It depends on (R)-lipoate as a cofactor.

In terms of biological role, the glycine cleavage system catalyzes the degradation of glycine. The H protein shuttles the methylamine group of glycine from the P protein to the T protein. This is Glycine cleavage system H protein from Corynebacterium jeikeium (strain K411).